Reading from the N-terminus, the 109-residue chain is Stress-response A/B barrel domain-containing protein HS1 (109 aa).

A Stress-response A/B barrel domain is found at Val8 to Tyr102. Residues Val36, Ile39, Glu40, and Met42 each coordinate Mg(2+).

Homodimer. Requires Mg(2+) as cofactor.

Heat stable protein involved in defense against fungal pathogens. Possesses antifungal activity against diverse pathogenic fungi. Possesses antimicrobial activity. Possesses ribonuclease activity. In Arabidopsis thaliana (Mouse-ear cress), this protein is Stress-response A/B barrel domain-containing protein HS1.